Consider the following 466-residue polypeptide: 3-isopropylmalate dehydratase large subunit (466 aa).

Residues Cys346, Cys406, and Cys409 each coordinate [4Fe-4S] cluster.

It belongs to the aconitase/IPM isomerase family. LeuC type 1 subfamily. Heterodimer of LeuC and LeuD. Requires [4Fe-4S] cluster as cofactor.

It carries out the reaction (2R,3S)-3-isopropylmalate = (2S)-2-isopropylmalate. Its pathway is amino-acid biosynthesis; L-leucine biosynthesis; L-leucine from 3-methyl-2-oxobutanoate: step 2/4. In terms of biological role, catalyzes the isomerization between 2-isopropylmalate and 3-isopropylmalate, via the formation of 2-isopropylmaleate. This chain is 3-isopropylmalate dehydratase large subunit, found in Cytophaga hutchinsonii (strain ATCC 33406 / DSM 1761 / CIP 103989 / NBRC 15051 / NCIMB 9469 / D465).